The sequence spans 851 residues: DNA mismatch repair protein MutS (851 aa).

602 to 609 (GPNMSGKS) is an ATP binding site.

Belongs to the DNA mismatch repair MutS family.

In terms of biological role, this protein is involved in the repair of mismatches in DNA. It is possible that it carries out the mismatch recognition step. This protein has a weak ATPase activity. This chain is DNA mismatch repair protein MutS, found in Streptococcus pyogenes serotype M12 (strain MGAS2096).